The sequence spans 138 residues: Small ribosomal subunit protein uS11c (138 aa).

The interval 1–22 (MAKPIPRIGSQRNRRINSRKNA) is disordered. The span at 12–22 (RNRRINSRKNA) shows a compositional bias: basic residues.

The protein belongs to the universal ribosomal protein uS11 family. Part of the 30S ribosomal subunit.

It localises to the plastid. It is found in the chloroplast. The protein is Small ribosomal subunit protein uS11c of Fagopyrum esculentum subsp. ancestrale (Wild buckwheat).